Here is a 135-residue protein sequence, read N- to C-terminus: Interleukin-4 (135 aa).

Residues 1-24 (MGLTYQLIPVLVCLLVCTSHFVHG) form the signal peptide. Cystine bridges form between C27-C135, C48-C85, and C70-C105. N-linked (GlcNAc...) asparagine glycosylation is present at N62.

This sequence belongs to the IL-4/IL-13 family.

Its subcellular location is the secreted. Functionally, participates in at least several B-cell activation processes as well as of other cell types. It is a costimulator of DNA-synthesis. It induces the expression of class II MHC molecules on resting B-cells. It enhances both secretion and cell surface expression of IgE and IgG1. It also regulates the expression of the low affinity Fc receptor for IgE (CD23) on both lymphocytes and monocytes. Positively regulates IL31RA expression in macrophages. Stimulates autophagy in dendritic cells by interfering with mTORC1 signaling and through the induction of RUFY4. The polypeptide is Interleukin-4 (IL4) (Bubalus carabanensis (Swamp type water buffalo)).